Reading from the N-terminus, the 209-residue chain is FMN-dependent NADH:quinone oxidoreductase (209 aa).

FMN-binding positions include serine 18, 102–105, and 146–149; these read MYNF and SRGG.

Belongs to the azoreductase type 1 family. In terms of assembly, homodimer. FMN serves as cofactor.

It carries out the reaction 2 a quinone + NADH + H(+) = 2 a 1,4-benzosemiquinone + NAD(+). The enzyme catalyses N,N-dimethyl-1,4-phenylenediamine + anthranilate + 2 NAD(+) = 2-(4-dimethylaminophenyl)diazenylbenzoate + 2 NADH + 2 H(+). Quinone reductase that provides resistance to thiol-specific stress caused by electrophilic quinones. In terms of biological role, also exhibits azoreductase activity. Catalyzes the reductive cleavage of the azo bond in aromatic azo compounds to the corresponding amines. This chain is FMN-dependent NADH:quinone oxidoreductase, found in Saccharophagus degradans (strain 2-40 / ATCC 43961 / DSM 17024).